Here is a 234-residue protein sequence, read N- to C-terminus: Proteasome subunit alpha type-2 (234 aa).

The residue at position 2 (alanine 2) is an N-acetylalanine. Tyrosine 6 bears the Phosphotyrosine mark. Serine 7, serine 14, and serine 16 each carry phosphoserine. Tyrosine 24 carries the phosphotyrosine modification. At lysine 70 the chain carries N6-acetyllysine. 2 positions are modified to phosphotyrosine: tyrosine 76 and tyrosine 121. Lysine 171 is subject to N6-acetyllysine.

The protein belongs to the peptidase T1A family. In terms of assembly, the 26S proteasome consists of a 20S proteasome core and two 19S regulatory subunits. The 20S proteasome core is a barrel-shaped complex made of 28 subunits that are arranged in four stacked rings. The two outer rings are each formed by seven alpha subunits, and the two inner rings are formed by seven beta subunits. The proteolytic activity is exerted by three beta-subunits PSMB5, PSMB6 and PSMB7. Post-translationally, phosphorylated on tyrosine residues; which may be important for nuclear import. Detected in liver (at protein level).

It is found in the cytoplasm. The protein resides in the nucleus. Its function is as follows. Component of the 20S core proteasome complex involved in the proteolytic degradation of most intracellular proteins. This complex plays numerous essential roles within the cell by associating with different regulatory particles. Associated with two 19S regulatory particles, forms the 26S proteasome and thus participates in the ATP-dependent degradation of ubiquitinated proteins. The 26S proteasome plays a key role in the maintenance of protein homeostasis by removing misfolded or damaged proteins that could impair cellular functions, and by removing proteins whose functions are no longer required. Associated with the PA200 or PA28, the 20S proteasome mediates ubiquitin-independent protein degradation. This type of proteolysis is required in several pathways including spermatogenesis (20S-PA200 complex) or generation of a subset of MHC class I-presented antigenic peptides (20S-PA28 complex). The chain is Proteasome subunit alpha type-2 (Psma2) from Mus musculus (Mouse).